The following is a 170-amino-acid chain: Copper transporter 1 (170 aa).

Residues 1–29 (MDHDHMHGMPRPSSSSSSSPSSMMNNGSM) form a disordered region. Residues 9-29 (MPRPSSSSSSSPSSMMNNGSM) are compositionally biased toward low complexity. 2 helical membrane passes run 65-85 (GMYA…EWLA) and 114-134 (IGLA…VFLV).

It belongs to the copper transporter (Ctr) (TC 1.A.56) family. SLC31A subfamily. Expressed in the root apex, lateral root primordia, embryo, trichomes, guard cells and pollen grains.

Its subcellular location is the membrane. Functionally, copper transporter involved in copper acquisition and transport in leaves. Required for copper homeostasis and normal plant growth and development. In Arabidopsis thaliana (Mouse-ear cress), this protein is Copper transporter 1 (COPT1).